Consider the following 185-residue polypeptide: Ribosome-recycling factor (185 aa).

Belongs to the RRF family.

Its subcellular location is the cytoplasm. Functionally, responsible for the release of ribosomes from messenger RNA at the termination of protein biosynthesis. May increase the efficiency of translation by recycling ribosomes from one round of translation to another. In Desulfosudis oleivorans (strain DSM 6200 / JCM 39069 / Hxd3) (Desulfococcus oleovorans), this protein is Ribosome-recycling factor.